Here is a 331-residue protein sequence, read N- to C-terminus: Anthranilate phosphoribosyltransferase (331 aa).

5-phospho-alpha-D-ribose 1-diphosphate contacts are provided by residues Gly79, 82 to 83 (GD), Thr87, 89 to 92 (NIST), 107 to 115 (KHGNYGATS), and Ala119. Gly79 serves as a coordination point for anthranilate. Ser91 is a Mg(2+) binding site. An anthranilate-binding site is contributed by Asn110. Residue Arg165 participates in anthranilate binding. 2 residues coordinate Mg(2+): Asp223 and Glu224.

It belongs to the anthranilate phosphoribosyltransferase family. In terms of assembly, homodimer. Requires Mg(2+) as cofactor.

The enzyme catalyses N-(5-phospho-beta-D-ribosyl)anthranilate + diphosphate = 5-phospho-alpha-D-ribose 1-diphosphate + anthranilate. It participates in amino-acid biosynthesis; L-tryptophan biosynthesis; L-tryptophan from chorismate: step 2/5. Catalyzes the transfer of the phosphoribosyl group of 5-phosphorylribose-1-pyrophosphate (PRPP) to anthranilate to yield N-(5'-phosphoribosyl)-anthranilate (PRA). The protein is Anthranilate phosphoribosyltransferase of Bacteroides fragilis (strain YCH46).